Here is a 142-residue protein sequence, read N- to C-terminus: Tail assembly protein E' (142 aa).

This sequence belongs to the mulikevirus tail assembly protein family.

Promotes tail assembly by creating a scaffold for the tail tube proteins. Tail assembly proteins E and E' would wrap the linear tape measure protein to create a tail assembly scaffold. In Enterobacteriaceae (Bacteriophage P2), this protein is Tail assembly protein E'.